Consider the following 106-residue polypeptide: PAT complex subunit Asterix (106 aa).

Residues 1–29 (MSANNMSDPRRPNKVLRYKPPPSECNPAL) are disordered. S2 bears the N-acetylserine mark. Over 2 to 32 (SANNMSDPRRPNKVLRYKPPPSECNPALDDP) the chain is Cytoplasmic. Residues 33–51 (TPDYMNLLGMIFSMCGLML) traverse the membrane as a helical segment. Residue K52 is a topological domain, lumenal. Residues 53–70 (LKWCAWVAVYCSFISFAN) traverse the membrane as a helical segment. At 71 to 74 (SRSS) the chain is on the cytoplasmic side. Residues 75 to 95 (EDTKQMMSSFMLSISAVVMSY) form a helical membrane-spanning segment. Residues 96 to 106 (LQNPQPMTPPW) are Lumenal-facing.

It belongs to the Asterix family. Component of the PAT complex, composed of WDR83OS/Asterix and CCDC47. The PAT complex is part of the multi-pass translocon (MPT) complex, composed of three subcomplexes, the GEL complex (composed of RAB5IF/OPTI and TMCO1), the BOS complex (composed of NCLN/Nicalin, NOMO1 and TMEM147) and the PAT complex (composed of WDR83OS/Asterix and CCDC47). The MPT complex associates with the SEC61 complex.

The protein resides in the endoplasmic reticulum membrane. Its function is as follows. Component of the multi-pass translocon (MPT) complex that mediates insertion of multi-pass membrane proteins into the lipid bilayer of membranes. The MPT complex takes over after the SEC61 complex: following membrane insertion of the first few transmembrane segments of proteins by the SEC61 complex, the MPT complex occludes the lateral gate of the SEC61 complex to promote insertion of subsequent transmembrane regions. Within the MPT complex, the PAT subcomplex sequesters any highly polar regions in the transmembrane domains away from the non-polar membrane environment until they can be buried in the interior of the fully assembled protein. Within the PAT subcomplex, WDR83OS/Asterix binds to and redirects the substrate to a location behind the SEC61 complex. In Bos taurus (Bovine), this protein is PAT complex subunit Asterix (WDR83OS).